The chain runs to 794 residues: Protein argonaute-4 (794 aa).

In terms of domain architecture, PAZ spans 152–271 (PIIEFMCEVL…LPLEVCNIVA (120 aa)). The 312-residue stretch at 442 to 753 (LIVVILPGKT…VAFRARYHLV (312 aa)) folds into the Piwi domain. Positions 758-779 (DSAEGSHVSGQSNGRDPQALAK) are disordered.

It belongs to the argonaute family. Ago subfamily.

The protein resides in the cytoplasm. The protein localises to the P-body. Its function is as follows. Required for RNA-mediated gene silencing (RNAi). Binds to short RNAs such as microRNAs (miRNAs) and represses the translation of mRNAs which are complementary to them. Lacks endonuclease activity and does not appear to cleave target mRNAs. The sequence is that of Protein argonaute-4 (AGO4) from Gallus gallus (Chicken).